A 306-amino-acid polypeptide reads, in one-letter code: Putative B3 domain-containing protein Os03g0621600 (306 aa).

The segment at residues 29 to 122 (FSVLCLMPIM…QLKTLIFDSS (94 aa)) is a DNA-binding region (TF-B3 1). The disordered stretch occupies residues 139–166 (YDIAMRNSQDEKKKRKQRDISRQGTVKP). Positions 210 to 306 (GYVMNNSSIH…VMDVHIIRRK (97 aa)) form a DNA-binding region, TF-B3 2.

The protein resides in the nucleus. This Oryza sativa subsp. japonica (Rice) protein is Putative B3 domain-containing protein Os03g0621600.